Reading from the N-terminus, the 303-residue chain is Kynurenine formamidase (303 aa).

Residues 95 to 99 (HGGYW) carry the HGGXW motif. Ser164 serves as the catalytic Nucleophile. Residues Asp247 and His279 contribute to the active site.

Belongs to the kynurenine formamidase family. As to quaternary structure, homodimer.

The protein resides in the cytoplasm. Its subcellular location is the cytosol. The protein localises to the nucleus. It catalyses the reaction N-formyl-L-kynurenine + H2O = L-kynurenine + formate + H(+). It functions in the pathway amino-acid degradation; L-tryptophan degradation via kynurenine pathway; L-kynurenine from L-tryptophan: step 2/2. Functionally, catalyzes the hydrolysis of N-formyl-L-kynurenine to L-kynurenine, the second step in the kynurenine pathway of tryptophan degradation. Kynurenine may be further oxidized to nicotinic acid, NAD(H) and NADP(H). Required for elimination of toxic metabolites. This is Kynurenine formamidase from Homo sapiens (Human).